A 724-amino-acid chain; its full sequence is MAGQWVRTVALLAARRHWRRSSQQQLLGTLKHAPVYSYQCLVVSRSLSSVEYEPKEKTFDKILIANRGEIACRVIKTCKKMGIKTVAIHSDVDASSVHVKMADEAVCVGPAPTSKSYLNMDAIMEAIKKTRAQAVHPGYGFLSENKEFAKRLAAEDVTFIGPDTHAIQAMGDKIESKLLAKRAKVNTIPGFDGVVKDADEAVRIAREIGYPVMIKASAGGGGKGMRIAWDDEETRDGFRFSSQEAASSFGDDRLLIEKFIDNPRHIEIQVLGDKHGNALWLNERECSIQRRNQKVVEEAPSIFLDPETRQAMGEQAVALAKAVKYSSAGTVEFLVDSQKNFYFLEMNTRLQVEHPVTECITGLDLVQEMILVAKGYPLRHKQEDIPISGWAVECRVYAEDPYKSFGLPSIGRLSQYQEPIHLPGVRVDSGIQPGSDISIYYDPMISKLVTYGSDRAEALKRMEDALDNYVIRGVTHNIPLLREVIINTRFVKGDISTKFLSDVYPDGFKGHTLTLSERNQLLAIASSVFVASQLRAQRFQEHSRVPVIRPDVAKWELSVKLHDEDHTVVASNNGPAFTVEVDGSKLNVTSTWNLASPLLSVNVDGTQRTVQCLSREAGGNMSIQFLGTVYKVHILTKLAAELNKFMLEKVPKDTSSTLCSPMPGVVVAVSVKPGDMVAEGQEICVIEAMKMQNSMTAGKMGKVKLVHCKAGDTVGEGDLLVELE.

Residues 1-48 (MAGQWVRTVALLAARRHWRRSSQQQLLGTLKHAPVYSYQCLVVSRSLS) constitute a mitochondrion transit peptide. Residues 58-505 (TFDKILIANR…STKFLSDVYP (448 aa)) form the Biotin carboxylation domain. Lys-61 is subject to N6-acetyllysine; alternate. Lys-61 is modified (N6-succinyllysine; alternate). An N6-succinyllysine modification is found at Lys-115. Lys-146 is subject to N6-acetyllysine; alternate. N6-succinyllysine; alternate is present on Lys-146. Residue Lys-150 is modified to N6-acetyllysine. Lys-173 contacts ATP. Positions 177 to 374 (KLLAKRAKVN…LVQEMILVAK (198 aa)) constitute an ATP-grasp domain. Lys-184 bears the N6-succinyllysine mark. An N6-acetyllysine; alternate modification is found at Lys-196. An N6-succinyllysine; alternate modification is found at Lys-196. ATP contacts are provided by residues 205–266 (AREI…PRHI), Glu-257, and Asn-292. At Ser-248 the chain carries Phosphoserine. Lys-258 is subject to N6-succinyllysine. The residue at position 324 (Lys-324) is an N6-acetyllysine; alternate. Lys-324 carries the N6-succinyllysine; alternate modification. Mg(2+) contacts are provided by Glu-332, Glu-345, and Asn-347. Mn(2+)-binding residues include Glu-332, Glu-345, and Asn-347. Arg-349 is a catalytic residue. N6-succinyllysine occurs at positions 381 and 403. Phe-405 serves as a coordination point for biotin. An N6-acetyllysine modification is found at Lys-492. N6-succinyllysine occurs at positions 498, 509, 554, and 644. One can recognise a Biotinyl-binding domain in the interval 645-724 (FMLEKVPKDT…GEGDLLVELE (80 aa)). N6-biotinyllysine; by HLCS is present on Lys-690.

As to quaternary structure, the holoenzyme is a dodecamer composed of 6 PCCA/alpha subunits and 6 PCCB/beta subunits. Interacts (via the biotin carboxylation domain) with SIRT4. Interacts with SIRT3 and SIRT5. The cofactor is Mg(2+). Mn(2+) serves as cofactor. It depends on biotin as a cofactor. Post-translationally, acetylated. In terms of processing, the biotin cofactor is covalently attached to the C-terminal biotinyl-binding domain and is required for the catalytic activity. Biotinylation is catalyzed by HLCS.

Its subcellular location is the mitochondrion matrix. The catalysed reaction is propanoyl-CoA + hydrogencarbonate + ATP = (S)-methylmalonyl-CoA + ADP + phosphate + H(+). The enzyme catalyses butanoyl-CoA + hydrogencarbonate + ATP = (2S)-ethylmalonyl-CoA + ADP + phosphate + H(+). It participates in metabolic intermediate metabolism; propanoyl-CoA degradation; succinyl-CoA from propanoyl-CoA: step 1/3. Its function is as follows. This is one of the 2 subunits of the biotin-dependent propionyl-CoA carboxylase (PCC), a mitochondrial enzyme involved in the catabolism of odd chain fatty acids, branched-chain amino acids isoleucine, threonine, methionine, and valine and other metabolites. Propionyl-CoA carboxylase catalyzes the carboxylation of propionyl-CoA/propanoyl-CoA to D-methylmalonyl-CoA/(S)-methylmalonyl-CoA. Within the holoenzyme, the alpha subunit catalyzes the ATP-dependent carboxylation of the biotin carried by the biotin carboxyl carrier (BCC) domain, while the beta subunit then transfers the carboxyl group from carboxylated biotin to propionyl-CoA. Propionyl-CoA carboxylase also significantly acts on butyryl-CoA/butanoyl-CoA, which is converted to ethylmalonyl-CoA/(2S)-ethylmalonyl-CoA. Other alternative minor substrates include (2E)-butenoyl-CoA/crotonoyl-CoA. This is Propionyl-CoA carboxylase alpha chain, mitochondrial from Mus musculus (Mouse).